The following is a 157-amino-acid chain: Protein Smg homolog (157 aa).

It belongs to the Smg family.

The chain is Protein Smg homolog from Tolumonas auensis (strain DSM 9187 / NBRC 110442 / TA 4).